Reading from the N-terminus, the 1529-residue chain is Protein STU1 (1529 aa).

Disordered stretches follow at residues 266 to 314, 617 to 638, 651 to 745, and 1070 to 1090; these read SMGR…DEQI, KPRT…ARKA, KELR…SQGI, and SAND…TSPI. Low complexity predominate over residues 273-290; that stretch reads TISSNSSTPASLSSSTMS. Composition is skewed to polar residues over residues 295-308 and 619-634; these read RTNF…ISPS and RTIT…SSLT. Low complexity predominate over residues 660–674; that stretch reads TSISRPSSRINSTSS. Over residues 708-723 the composition is skewed to polar residues; it reads TPSTSSLSRVESNQDA.

It belongs to the CLASP family. In terms of assembly, interacts with microtubules.

It is found in the cytoplasm. It localises to the cytoskeleton. The protein localises to the nucleus. Its subcellular location is the spindle. Its function is as follows. Microtubule binding protein that promotes the stabilization of dynamic microtubules. Required for mitotic spindle formation. The sequence is that of Protein STU1 (STU1) from Debaryomyces hansenii (strain ATCC 36239 / CBS 767 / BCRC 21394 / JCM 1990 / NBRC 0083 / IGC 2968) (Yeast).